The chain runs to 202 residues: LexA repressor (202 aa).

A DNA-binding region (H-T-H motif) is located at residues 28–48 (RAEIASRLGFRSPNAAEEHLK). Active-site for autocatalytic cleavage activity residues include serine 119 and lysine 156.

It belongs to the peptidase S24 family. Homodimer.

It carries out the reaction Hydrolysis of Ala-|-Gly bond in repressor LexA.. Its function is as follows. Represses a number of genes involved in the response to DNA damage (SOS response), including recA and lexA. Binds to the 16 bp palindromic sequence 5'-CTGTATATATATACAG-3'. In the presence of single-stranded DNA, RecA interacts with LexA causing an autocatalytic cleavage which disrupts the DNA-binding part of LexA, leading to derepression of the SOS regulon and eventually DNA repair. This Sodalis glossinidius (strain morsitans) protein is LexA repressor.